Here is a 356-residue protein sequence, read N- to C-terminus: uncharacterized protein (356 aa).

Transmembrane regions (helical) follow at residues Phe2–Leu22, Tyr36–Phe56, Met77–Tyr97, Ile99–Leu119, Ile124–Ile144, and Leu154–Ile174. Positions Gln218–Ile353 constitute a GGDEF domain.

The protein localises to the cell membrane. This is an uncharacterized protein from Staphylococcus saprophyticus subsp. saprophyticus (strain ATCC 15305 / DSM 20229 / NCIMB 8711 / NCTC 7292 / S-41).